The sequence spans 271 residues: Magnesium dechelatase SGR2, chloroplastic (271 aa).

The N-terminal 54 residues, 1-54 (MCSLATNLLLPSKMKPVFPEKLSTSSLCVTTRRSKMKNRSIVPVARLFGPAIFE), are a transit peptide targeting the chloroplast.

Belongs to the staygreen family. Interacts with the light harvesting complex II (LHCII). Interacts with the chlorophyll catabolic enzyme (CCE) RCCR.

It is found in the plastid. Its subcellular location is the chloroplast thylakoid membrane. The catalysed reaction is chlorophyll a + 2 H(+) = pheophytin a + Mg(2+). In terms of biological role, magnesium chelatase involved in chlorophyll a degradation in the chlorophyll-protein complexes of photosystem I (PSI) and photosystem II (PSII). Contributes to the degradation of PSI and PSII in the thylakoid membranes. Required to trigger chlorophyll degradation during natural and dark-induced leaf senescence. Mediates chlorophyll degradation during embryo degreening. Recombinant SGR2 possesses high dechelating activity against chlorophyll a, very low activity against chlorophyllide a, and no activity against chlorophyll b. The protein is Magnesium dechelatase SGR2, chloroplastic of Arabidopsis thaliana (Mouse-ear cress).